The chain runs to 317 residues: Peroxidase 22.3 (317 aa).

The signal sequence occupies residues 1-25; sequence MASATNSSLSLMLLVAAAMASVASA. Gln-26 carries the pyrrolidone carboxylic acid modification. 2 disulfide bridges follow: Cys-36/Cys-111 and Cys-69/Cys-74. The Proton acceptor role is filled by His-67. 5 residues coordinate Ca(2+): Asp-68, Val-71, Gly-73, Asp-75, and Ser-77. N-linked (GlcNAc...) asparagine glycosylation occurs at Asn-112. Intrachain disulfides connect Cys-117–Cys-312 and Cys-196–Cys-221. Substrate is bound at residue Pro-159. An N-linked (GlcNAc...) asparagine glycan is attached at Asn-171. His-189 contacts heme b. Residue Thr-190 participates in Ca(2+) binding. A glycan (N-linked (GlcNAc...) asparagine) is linked at Asn-205. The Ca(2+) site is built by Asp-236, Thr-239, and Asp-244.

Belongs to the peroxidase family. Classical plant (class III) peroxidase subfamily. The cofactor is heme b. Ca(2+) serves as cofactor.

It is found in the secreted. The catalysed reaction is H2O2 + AH2 = A + 2 H2O. In terms of biological role, removal of H(2)O(2), oxidation of toxic reductants, biosynthesis and degradation of lignin, suberization, auxin catabolism, response to environmental stresses such as wounding, pathogen attack and oxidative stress. These functions might be dependent on each isozyme/isoform in each plant tissue. This Oryza sativa subsp. japonica (Rice) protein is Peroxidase 22.3.